The following is a 135-amino-acid chain: Nucleoside diphosphate kinase (135 aa).

Residues lysine 10, phenylalanine 58, arginine 86, threonine 92, arginine 103, and asparagine 113 each coordinate ATP. Histidine 116 functions as the Pros-phosphohistidine intermediate in the catalytic mechanism.

The protein belongs to the NDK family. Homotetramer. The cofactor is Mg(2+).

It localises to the cytoplasm. It catalyses the reaction a 2'-deoxyribonucleoside 5'-diphosphate + ATP = a 2'-deoxyribonucleoside 5'-triphosphate + ADP. The catalysed reaction is a ribonucleoside 5'-diphosphate + ATP = a ribonucleoside 5'-triphosphate + ADP. Major role in the synthesis of nucleoside triphosphates other than ATP. The ATP gamma phosphate is transferred to the NDP beta phosphate via a ping-pong mechanism, using a phosphorylated active-site intermediate. The sequence is that of Nucleoside diphosphate kinase from Nocardioides sp. (strain ATCC BAA-499 / JS614).